The sequence spans 270 residues: Putative protein-disulfide oxidoreductase RT0103 (270 aa).

A signal peptide spans 1–17; sequence MKNIFIVLIFLFLSSCA. Positions 71 to 264 constitute a Thioredoxin domain; the sequence is SVLTQDLHEQ…ISRAVDRALE (194 aa). Cys-117 and Cys-120 are oxidised to a cystine.

This sequence belongs to the thioredoxin family. DsbA subfamily.

The protein localises to the periplasm. May be required for disulfide bond formation in some proteins. The chain is Putative protein-disulfide oxidoreductase RT0103 from Rickettsia typhi (strain ATCC VR-144 / Wilmington).